Consider the following 957-residue polypeptide: Glycine dehydrogenase (decarboxylating) (957 aa).

An N6-(pyridoxal phosphate)lysine modification is found at Lys-708.

This sequence belongs to the GcvP family. As to quaternary structure, the glycine cleavage system is composed of four proteins: P, T, L and H. Pyridoxal 5'-phosphate serves as cofactor.

The enzyme catalyses N(6)-[(R)-lipoyl]-L-lysyl-[glycine-cleavage complex H protein] + glycine + H(+) = N(6)-[(R)-S(8)-aminomethyldihydrolipoyl]-L-lysyl-[glycine-cleavage complex H protein] + CO2. Its function is as follows. The glycine cleavage system catalyzes the degradation of glycine. The P protein binds the alpha-amino group of glycine through its pyridoxal phosphate cofactor; CO(2) is released and the remaining methylamine moiety is then transferred to the lipoamide cofactor of the H protein. The chain is Glycine dehydrogenase (decarboxylating) from Shigella boydii serotype 18 (strain CDC 3083-94 / BS512).